A 125-amino-acid chain; its full sequence is MAFDKDAFLTALDSMTVLELNDLVKAIEEKFGVSAAAMAAPAAAGGGGAAAAAEEKTEFNVVLLEAGANKVSVIKAVREITGLGLKEAKDLVDGAPKNVKEAAPKADADAAKKKLEDAGAKVELK.

The protein belongs to the bacterial ribosomal protein bL12 family. Homodimer. Part of the ribosomal stalk of the 50S ribosomal subunit. Forms a multimeric L10(L12)X complex, where L10 forms an elongated spine to which 2 to 4 L12 dimers bind in a sequential fashion. Binds GTP-bound translation factors.

Forms part of the ribosomal stalk which helps the ribosome interact with GTP-bound translation factors. Is thus essential for accurate translation. This is Large ribosomal subunit protein bL12 from Polaromonas sp. (strain JS666 / ATCC BAA-500).